Here is a 499-residue protein sequence, read N- to C-terminus: Protein SENSITIVE TO PROTON RHIZOTOXICITY 1 (499 aa).

Positions 1 to 31 (METEDDLCNTNWGSSSSKSREPGSSDCGNST) are disordered. Residues 244–266 (HFCTICGKGFKRDANLRMHMRGH) form a C2H2-type 1 zinc finger. The C2H2-type 2; atypical zinc finger occupies 354-385 (KHCGKNKWLCSCGTTFSRKDKLFGHIALFQGH). The tract at residues 390-436 (PLEETKPSASTSTQRGSSEGGNNNQGMVGFNLGSASNANQETTQPGM) is disordered. 2 stretches are compositionally biased toward polar residues: residues 396–415 (PSAS…NNQG) and 422–435 (GSAS…TQPG).

Expressed in roots (e.g. root tips and lateral roots), leaves, flowers (e.g. stigma, sepal, anther, and filament), stems, siliques and cotyledons.

The protein resides in the nucleus. Probable transcription factor. Together with STOP2, plays a critical role in tolerance to major stress factors in acid soils such as proton H(+) and aluminum ion Al(3+). Required for the expression of genes in response to acidic stress (e.g. ALMT1 and MATE), and Al-activated citrate exudation. This Arabidopsis thaliana (Mouse-ear cress) protein is Protein SENSITIVE TO PROTON RHIZOTOXICITY 1.